Here is a 212-residue protein sequence, read N- to C-terminus: Putative 3-methyladenine DNA glycosylase (212 aa).

It belongs to the DNA glycosylase MPG family.

The polypeptide is Putative 3-methyladenine DNA glycosylase (Psychrobacter cryohalolentis (strain ATCC BAA-1226 / DSM 17306 / VKM B-2378 / K5)).